Reading from the N-terminus, the 320-residue chain is Lipoyl synthase (320 aa).

Residues Cys67, Cys72, Cys78, Cys93, Cys97, Cys100, and Ser307 each coordinate [4Fe-4S] cluster. The Radical SAM core domain maps to 79–296 (FNHGTATFMI…RDKANEMGFE (218 aa)).

The protein belongs to the radical SAM superfamily. Lipoyl synthase family. [4Fe-4S] cluster is required as a cofactor.

It localises to the cytoplasm. The enzyme catalyses [[Fe-S] cluster scaffold protein carrying a second [4Fe-4S](2+) cluster] + N(6)-octanoyl-L-lysyl-[protein] + 2 oxidized [2Fe-2S]-[ferredoxin] + 2 S-adenosyl-L-methionine + 4 H(+) = [[Fe-S] cluster scaffold protein] + N(6)-[(R)-dihydrolipoyl]-L-lysyl-[protein] + 4 Fe(3+) + 2 hydrogen sulfide + 2 5'-deoxyadenosine + 2 L-methionine + 2 reduced [2Fe-2S]-[ferredoxin]. It participates in protein modification; protein lipoylation via endogenous pathway; protein N(6)-(lipoyl)lysine from octanoyl-[acyl-carrier-protein]: step 2/2. In terms of biological role, catalyzes the radical-mediated insertion of two sulfur atoms into the C-6 and C-8 positions of the octanoyl moiety bound to the lipoyl domains of lipoate-dependent enzymes, thereby converting the octanoylated domains into lipoylated derivatives. The protein is Lipoyl synthase of Haemophilus influenzae (strain PittEE).